We begin with the raw amino-acid sequence, 163 residues long: Phosphopantetheine adenylyltransferase (163 aa).

Ser9 is a binding site for substrate. ATP contacts are provided by residues Ser9–Phe10 and His17. Substrate-binding residues include Lys41, Val78, and Arg92. Residues Gly93–Arg95, Glu103, and Ser128–Thr134 each bind ATP.

The protein belongs to the bacterial CoaD family. In terms of assembly, homohexamer. It depends on Mg(2+) as a cofactor.

It is found in the cytoplasm. It catalyses the reaction (R)-4'-phosphopantetheine + ATP + H(+) = 3'-dephospho-CoA + diphosphate. Its pathway is cofactor biosynthesis; coenzyme A biosynthesis; CoA from (R)-pantothenate: step 4/5. Its function is as follows. Reversibly transfers an adenylyl group from ATP to 4'-phosphopantetheine, yielding dephospho-CoA (dPCoA) and pyrophosphate. This chain is Phosphopantetheine adenylyltransferase, found in Rhizobium meliloti (strain 1021) (Ensifer meliloti).